A 292-amino-acid chain; its full sequence is Potassium channel, subfamily K, member 16 (292 aa).

At 1 to 13 the chain is on the cytoplasmic side; that stretch reads MPRAGVCGCWGGQ. The helical transmembrane segment at 14 to 34 threads the bilayer; it reads VLPLLLAYICYLLLGATIFQL. The pore-forming intramembrane region spans 98 to 116; that stretch reads SFFFAGTVVTTIGYGNLAP. 4 residues coordinate K(+): threonine 108, isoleucine 109, glycine 110, and tyrosine 111. A selectivity filter 1 region spans residues 108–113; sequence TIGYGN. The helical transmembrane segment at 120-140 threads the bilayer; sequence AGQVFCVFYALMGIPLNVVFL. Over 141-165 the chain is Cytoplasmic; that stretch reads NHLGTGLRAHLTTLDRWEDHPRHSQ. A helical transmembrane segment spans residues 166–186; that stretch reads LLQVLGLALFLTLGTLVILIF. Positions 202–221 form an intramembrane region, pore-forming; it reads GFYFAFITLSTIGFGDYVVG. K(+)-binding residues include threonine 212, isoleucine 213, glycine 214, and phenylalanine 215. The tract at residues 212-217 is selectivity filter 2; the sequence is TIGFGD. A helical membrane pass occupies residues 238–258; that stretch reads IWILLGLAWLAVVLSLGSLLL. Over 259 to 292 the chain is Cytoplasmic; it reads HRCSRLWQLIRGLDLKDGAAPDSEPRSQKIPISA.

The protein belongs to the two pore domain potassium channel (TC 1.A.1.8) family. As to quaternary structure, homodimer; disulfide-linked. Heterodimer with KCNK17 and KCNK5. Expressed in pacreatic beta-cells (at protein level). Expressed in pacreatic delta-cells (at protein level).

The protein localises to the cell membrane. It is found in the endoplasmic reticulum membrane. Its subcellular location is the mitochondrion inner membrane. The enzyme catalyses K(+)(in) = K(+)(out). The catalysed reaction is Rb(+)(in) = Rb(+)(out). It carries out the reaction Cs(+)(in) = Cs(+)(out). In terms of biological role, k(+) channel that conducts voltage-dependent outward rectifying currents upon membrane depolarization. Voltage sensing is coupled to K(+) electrochemical gradient in an 'ion flux gating' mode where outward but not inward ion flow opens the gate. Homo- and heterodimerizes to form functional channels with distinct regulatory and gating properties. In pancreatic islets, conducts K(+) countercurrents for Ca(2+) release from the endoplasmic reticulum (ER) and regulates the frequency and duration of cytosolic Ca(2+) oscillations coupled to secretion of pancreatic hormones. In pancreatic beta cells, drives ER Ca(2+) efflux, which in turn activates Ca(2+)-dependent plasma membrane K(+) slow currents and cytosolic Ca(2+) influx, overall contributing to synchronous cytosolic Ca(2+) oscillations. Limits glucose-induced cytosolic Ca(2+) oscillations coupled to second-phase INS secretion. Contributes to beta cell adaptation to acute inflammation by maintaining normal cytosolic Ca(2+) levels and INS secretion. May regulate beta cell mitochondrial Ca(2+) levels either indirectly via ER Ca(2+) efflux or directly by hyperpolarizing the mitochondrial membrane potential. Limits mitochondrial Ca(2+) oscillations and ATP production involved in glucose homeostasis upon metabolic stress. In pancreatic delta cells, limits Ca(2+)-induced Ca(2+)-release involved in somatostatin secretion and modulates islet paracrine signaling involved in glucagon secretion. Permeable to other monovalent cations such as Rb(+) and Cs(+). This is Potassium channel, subfamily K, member 16 from Mus musculus (Mouse).